The sequence spans 104 residues: Iron-sulfur cluster assembly protein CyaY (104 aa).

This sequence belongs to the frataxin family.

In terms of biological role, involved in iron-sulfur (Fe-S) cluster assembly. May act as a regulator of Fe-S biogenesis. This Aliivibrio fischeri (strain ATCC 700601 / ES114) (Vibrio fischeri) protein is Iron-sulfur cluster assembly protein CyaY.